Here is a 479-residue protein sequence, read N- to C-terminus: uncharacterized protein (479 aa).

The tract at residues 180–203 is disordered; the sequence is LGGEHSDSTNTELANPSSTTTRIT. Residues 187–202 show a composition bias toward polar residues; it reads STNTELANPSSTTTRI. The PE-PPE domain occupies 240-462; sequence PGTTPEVVSY…LKPLVDAGYS (223 aa).

It belongs to the mycobacterial PPE family.

This is an uncharacterized protein from Mycobacterium tuberculosis (strain CDC 1551 / Oshkosh).